Reading from the N-terminus, the 730-residue chain is Procollagen-lysine,2-oxoglutarate 5-dioxygenase 1 (730 aa).

The signal sequence occupies residues 1-20; that stretch reads MVPPAVLLPWVVLPLLGVQG. N200, N403, and N541 each carry an N-linked (GlcNAc...) asparagine glycan. The Fe2OG dioxygenase domain maps to 639–730; sequence QFELAFVVRY…RYIAVSFIDP (92 aa). Fe cation contacts are provided by H659 and D661. A glycan (N-linked (GlcNAc...) asparagine) is linked at N689. H711 provides a ligand contact to Fe cation. Residue R721 is part of the active site.

In terms of assembly, homodimer. Requires Fe(2+) as cofactor. The cofactor is L-ascorbate.

It localises to the rough endoplasmic reticulum membrane. It carries out the reaction L-lysyl-[collagen] + 2-oxoglutarate + O2 = (5R)-5-hydroxy-L-lysyl-[collagen] + succinate + CO2. Forms hydroxylysine residues in -Xaa-Lys-Gly- sequences in collagens. These hydroxylysines serve as sites of attachment for carbohydrate units and are essential for the stability of the intermolecular collagen cross-links. The protein is Procollagen-lysine,2-oxoglutarate 5-dioxygenase 1 (PLOD1) of Gallus gallus (Chicken).